Reading from the N-terminus, the 24-residue chain is Citropin-3.1.2 (24 aa).

As to expression, expressed by the dorsal and submental skin glands.

The protein resides in the secreted. This is Citropin-3.1.2 from Ranoidea citropa (Australian Blue Mountains tree frog).